Here is a 458-residue protein sequence, read N- to C-terminus: MTTGPLPRRVALISVHTSPLAQPGTGDAGGMNVYVWQTATRLARRGVEVEIFTRATSSSDAPRVAAAPRVTVRNVVAGPFEGLDKRDLPAQLCAFTAGVLRAEAAQEPGYYDLIHSHYWLSGQVGWLARDRWGVPLVHTAHTLAAVKNASLAAGDTAEPQLRVIGEQQVVDEADRLIANTETEASELISMYGADPARIDVVTPGADLDCYTPGPREMARTSLGLDQNEAIVTFVGRIQPLKAPDLLIEAAAPLIRRSRTSRRPVRVLIVGGPSGSGLDRPTALIDLAHDLGIADAVTFLPPQAPARLADVYRASNLVAVPSHSESFGLVAIEAQACGTPVLAADVGGLSVAVAGGRTGVLVGSHAVGDWTNALEKALAQPDRLAEMGRNARVHAEQFSWDHTVDAMLSSYSRAMQSFAARNPDAAQSVAAQNVTGSSSRTRRPWRRRRSTLLPMTGRS.

His16 contacts 1D-myo-inositol 3-phosphate. Residues 22-23 (QP) and Gly30 contribute to the UDP-N-acetyl-alpha-D-glucosamine site. 1D-myo-inositol 3-phosphate-binding positions include 27–32 (DAGGMN), Lys85, Tyr118, Thr142, and Arg162. UDP-N-acetyl-alpha-D-glucosamine is bound by residues Arg236, Lys241, and Gln302. Mg(2+) contacts are provided by Tyr311, Arg312, and Ser314. UDP-N-acetyl-alpha-D-glucosamine is bound by residues Glu324 and Glu332. Thr338 contributes to the Mg(2+) binding site. The disordered stretch occupies residues 428 to 458 (VAAQNVTGSSSRTRRPWRRRRSTLLPMTGRS). Basic residues predominate over residues 439–449 (RTRRPWRRRRS).

The protein belongs to the glycosyltransferase group 1 family. MshA subfamily. In terms of assembly, homodimer.

It carries out the reaction 1D-myo-inositol 3-phosphate + UDP-N-acetyl-alpha-D-glucosamine = 1D-myo-inositol 2-acetamido-2-deoxy-alpha-D-glucopyranoside 3-phosphate + UDP + H(+). Catalyzes the transfer of a N-acetyl-glucosamine moiety to 1D-myo-inositol 3-phosphate to produce 1D-myo-inositol 2-acetamido-2-deoxy-glucopyranoside 3-phosphate in the mycothiol biosynthesis pathway. This is D-inositol 3-phosphate glycosyltransferase from Gordonia bronchialis (strain ATCC 25592 / DSM 43247 / BCRC 13721 / JCM 3198 / KCTC 3076 / NBRC 16047 / NCTC 10667) (Rhodococcus bronchialis).